Here is a 1707-residue protein sequence, read N- to C-terminus: Histone-lysine N-methyltransferase SETD1A (1707 aa).

The segment at 60–89 (LQDPRCHVRSKNRDFSLPVPKFKLDEFYIG) is interaction with WDR82. One can recognise an RRM domain in the interval 84 to 172 (DEFYIGQIPL…NIIHAQLDIK (89 aa)). Disordered regions lie at residues 194–308 (PTGG…YQDA), 331–363 (TAAT…RSSD), 381–486 (SYPP…AQHS), 506–655 (LASD…PPPH), 834–854 (AKPF…EKTK), 891–1251 (PSFK…GTEV), and 1264–1293 (ARRG…RPLL). The segment covering 239–277 (NGTPCSQDTSFSSSRQDTPSSFGQFTPQSSQGTPYTSRG) has biased composition (polar residues). 2 stretches are compositionally biased toward low complexity: residues 278–295 (STPY…TSTS) and 331–357 (TAAT…SSSS). Residues 430–440 (SEAPPPEPPEP) show a composition bias toward pro residues. Ser-459 and Ser-464 each carry phosphoserine. The span at 459–473 (SPRPASPARSGSPAP) shows a compositional bias: low complexity. Over residues 474-486 (ETTNESVPFAQHS) the composition is skewed to polar residues. Phosphoserine is present on residues Ser-508 and Ser-565. Residues 568 to 578 (ANGQNQASPCS) show a composition bias toward polar residues. Composition is skewed to pro residues over residues 593–617 (SPPP…PPPY) and 624–655 (GYPP…PPPH). A compositionally biased stretch (basic and acidic residues) spans 844 to 854 (QAKEEDKEKTK). Phosphoserine is present on Ser-915. Acidic residues-rich tracts occupy residues 918 to 927 (AEEDEDDPEQ) and 976 to 992 (KDEE…DREE). A compositionally biased stretch (basic and acidic residues) spans 993–1002 (AVDTTKKETE). The span at 1003–1012 (VSDGEDEESD) shows a compositional bias: acidic residues. A compositionally biased stretch (low complexity) spans 1032–1060 (DSESSSSSSSSSSSSSSSSSSSSSSSSES). Positions 1077 to 1094 (ASPPPREVPVPTPAPVEV) are enriched in pro residues. Residue Ser-1103 is modified to Phosphoserine. The span at 1127-1145 (PSAPLRPPEPPAGPPAPAP) shows a compositional bias: pro residues. The segment covering 1275–1284 (EDSEATETSD) has biased composition (acidic residues). Residues 1299-1303 (EHNYA) carry the HCFC1-binding motif (HBM) motif. 2 disordered regions span residues 1307–1417 (KPTP…AYEP) and 1472–1499 (NLTT…SEGY). Residues 1308–1323 (PTPPAPALRPPEPVPA) show a composition bias toward pro residues. The span at 1360 to 1377 (EGEEEGEEEGEEEEEESS) shows a compositional bias: acidic residues. Basic residues predominate over residues 1390-1403 (RRRSLRSHARRRRP). Pro residues predominate over residues 1404–1414 (PPPPPPPPPRA). The interaction with CFP1 stretch occupies residues 1415–1450 (YEPRSEFEQMTILYDIWNSGLDSEDMSYLRLTYERL). An interaction with ASH2L, RBBP5 and WDR5 region spans residues 1450–1537 (LLQQTSGADW…GTNRVLSERR (88 aa)). The WDR5 interaction motif (WIN) motif lies at 1492–1497 (GSARSE). Positions 1537–1542 (RSEQRR) match the RxxxRR motif motif. The region spanning 1568–1685 (KKLRFGRSRI…VDEEITYDYK (118 aa)) is the SET domain. An S-adenosyl-L-methionine-binding site is contributed by Tyr-1684. In terms of domain architecture, Post-SET spans 1691–1707 (NKIPCLCGTESCRGSLN).

This sequence belongs to the class V-like SAM-binding methyltransferase superfamily. In terms of assembly, component of the SET1A/COMPASS complex composed of the catalytic subunit SETD1A, WDR5, WDR82, RBBP5, ASH2L/ASH2, CXXC1/CFP1, HCFC1 and DPY30 homotrimer. Forms a core complex with the evolutionary conserved subcomplex WRAD composed of WDR5, RBBP5, ASH2L/ASH2 and DPY30 subunits; WRAD differentially stimulates the methyltransferase activity. Interacts with BOD1L1 (via COMPASS-Shg1 domain) at replication forks. Interacts with HCFC1. Interacts with ASH2/ASH2L. Interacts with CXXC1/CFP1. Interacts with RBBP5. Interacts (via N-terminal region) with WDR82; the interaction is direct. Interacts (via the RRM domain) with hyperphosphorylated C-terminal domain (CTD) of RNA polymerase II large subunit (POLR2A) only in the presence of WDR82. Binds specifically to CTD heptad repeats phosphorylated on 'Ser-5' of each heptad. Interacts with ZNF335. Interacts with SUPT6H. Interacts with NAP1L1. Interacts (via WIN motif) with WDR5.

It localises to the nucleus speckle. The protein resides in the chromosome. The protein localises to the cytoplasm. The catalysed reaction is L-lysyl(4)-[histone H3] + S-adenosyl-L-methionine = N(6)-methyl-L-lysyl(4)-[histone H3] + S-adenosyl-L-homocysteine + H(+). The enzyme catalyses N(6)-methyl-L-lysyl(4)-[histone H3] + S-adenosyl-L-methionine = N(6),N(6)-dimethyl-L-lysyl(4)-[histone H3] + S-adenosyl-L-homocysteine + H(+). It carries out the reaction N(6),N(6)-dimethyl-L-lysyl(4)-[histone H3] + S-adenosyl-L-methionine = N(6),N(6),N(6)-trimethyl-L-lysyl(4)-[histone H3] + S-adenosyl-L-homocysteine + H(+). Histone methyltransferase that catalyzes methyl group transfer from S-adenosyl-L-methionine to the epsilon-amino group of 'Lys-4' of histone H3 (H3K4) via a non-processive mechanism. Part of chromatin remodeling machinery, forms H3K4me1, H3K4me2 and H3K4me3 methylation marks at active chromatin sites where transcription and DNA repair take place. Responsible for H3K4me3 enriched promoters and transcriptional programming of inner mass stem cells and neuron progenitors during embryogenesis. Required for H3K4me1 mark at stalled replication forks. Mediates FANCD2-dependent nucleosome remodeling and RAD51 nucleofilaments stabilization at reversed forks, protecting them from nucleolytic degradation. Does not methylate 'Lys-4' of histone H3 if the neighboring 'Lys-9' residue is already methylated. Binds RNAs involved in RNA processing and the DNA damage response. The sequence is that of Histone-lysine N-methyltransferase SETD1A (SETD1A) from Homo sapiens (Human).